Here is a 372-residue protein sequence, read N- to C-terminus: Methylthioribose-1-phosphate isomerase 1 (372 aa).

The active-site Proton donor is the aspartate 254.

The protein belongs to the eIF-2B alpha/beta/delta subunits family. MtnA subfamily.

Its subcellular location is the cytoplasm. It is found in the nucleus. The enzyme catalyses 5-(methylsulfanyl)-alpha-D-ribose 1-phosphate = 5-(methylsulfanyl)-D-ribulose 1-phosphate. Its pathway is amino-acid biosynthesis; L-methionine biosynthesis via salvage pathway; L-methionine from S-methyl-5-thio-alpha-D-ribose 1-phosphate: step 1/6. Catalyzes the interconversion of methylthioribose-1-phosphate (MTR-1-P) into methylthioribulose-1-phosphate (MTRu-1-P). The sequence is that of Methylthioribose-1-phosphate isomerase 1 from Trypanosoma cruzi (strain CL Brener).